The chain runs to 441 residues: MSEMTPREIVHELDTHIIGQHDAKRSVAIALRNRWRRMQLDVDFRQEVTPKNILMIGPTGVGKTEIARRLAKLAKAPFIKVEATKFTEVGYVGKEVEQIIRDLTDSAIKMTREDQMKKCKFKAEEAAEERILDALLPKPKEDWDNEKPDDSATRQIFRKKLREGQLDDKEIEIDVAAPQVGIEIMSPPGMEEMTNQLQSMFQNMGPGDSKRRKMPIKEAYKLMIEEEAAKLVNQDDMKEQAIELVEQHGIVFLDEIDKICKRGESSGPDVSREGVQRDLLPLVEGCTVNTKHGMVKTDHILFIASGAFQMSKPSDLIPELQGRLPIRVELSALTADDFKRILTEPHASLTEQHVAMMGTEDVKIEFTEDGIESIAQAAWQVNERTENIGARRLHTVMERLMEDLSYDASDKSGNTFVIDAEYVSSHLDDLVQDEDLSRFIL.

ATP contacts are provided by residues I18, 60–65 (GVGKTE), D254, E319, and R391.

The protein belongs to the ClpX chaperone family. HslU subfamily. A double ring-shaped homohexamer of HslV is capped on each side by a ring-shaped HslU homohexamer. The assembly of the HslU/HslV complex is dependent on binding of ATP.

Its subcellular location is the cytoplasm. Functionally, ATPase subunit of a proteasome-like degradation complex; this subunit has chaperone activity. The binding of ATP and its subsequent hydrolysis by HslU are essential for unfolding of protein substrates subsequently hydrolyzed by HslV. HslU recognizes the N-terminal part of its protein substrates and unfolds these before they are guided to HslV for hydrolysis. The protein is ATP-dependent protease ATPase subunit HslU of Shewanella sediminis (strain HAW-EB3).